Reading from the N-terminus, the 240-residue chain is Uridylate kinase (240 aa).

Position 13-16 (13-16) interacts with ATP; sequence KLSG. Residues 21 to 26 form an involved in allosteric activation by GTP region; it reads GDKGFG. UMP is bound at residue Gly-55. Positions 56 and 60 each coordinate ATP. Residues Asp-75 and 136–143 each bind UMP; that span reads IGNPYFST. Positions 164, 170, and 173 each coordinate ATP.

It belongs to the UMP kinase family. Homohexamer.

Its subcellular location is the cytoplasm. The enzyme catalyses UMP + ATP = UDP + ADP. It functions in the pathway pyrimidine metabolism; CTP biosynthesis via de novo pathway; UDP from UMP (UMPK route): step 1/1. Allosterically activated by GTP. Inhibited by UTP. Catalyzes the reversible phosphorylation of UMP to UDP. The chain is Uridylate kinase from Staphylococcus haemolyticus (strain JCSC1435).